The primary structure comprises 78 residues: Protein Class8-like (78 aa).

An N-terminal signal peptide occupies residues 1–19 (MRTLVVLLIGAVLLCSANA). The propeptide occupies 20 to 36 (FLDELLAESVNDMTDKR). One can recognise a ShKT domain in the interval 38–78 (CFDKYKSNICGGVISPAHCVRRSGRMAKFAKENCAHFCGFC). 3 disulfides stabilise this stretch: Cys38–Cys78, Cys47–Cys71, and Cys56–Cys75.

In terms of tissue distribution, expressed in ganglion neurons residing in the mesoglea (observed in both planulae and primary polyps). Not expressed in nematocytes.

Functionally, probable neuropeptide. The sequence is that of Protein Class8-like from Nematostella vectensis (Starlet sea anemone).